A 617-amino-acid chain; its full sequence is Vacuolar protein sorting-associated protein 33B (617 aa).

A2 carries the post-translational modification N-acetylalanine.

It belongs to the STXBP/unc-18/SEC1 family. In terms of assembly, interacts with RAB11A and VIPAS39. Associates with adapter protein complex 3 (AP-3), clathrin:AP-3 and clathrin:HGS complexes. In terms of processing, phosphorylated on tyrosine residues.

Its subcellular location is the late endosome membrane. It is found in the lysosome membrane. The protein resides in the early endosome. The protein localises to the cytoplasmic vesicle. It localises to the clathrin-coated vesicle. Its subcellular location is the recycling endosome. In terms of biological role, may play a role in vesicle-mediated protein trafficking to lysosomal compartments and in membrane docking/fusion reactions of late endosomes/lysosomes. Required for proper trafficking and targeting of the collagen-modifying enzyme lysyl hydroxylase 3 (LH3) to intracellular collagen. Mediates phagolysosomal fusion in macrophages. Proposed to be involved in endosomal maturation implicating in part VIPAS39. In epithelial cells, the VPS33B:VIPAS39 complex may play a role in the apical RAB11A-dependentrecycling pathway and in the maintenance of the apical-basolateral polarity. Seems to be involved in the sorting of specific cargos from the trans-Golgi network to alpha-granule-destined multivesicular bodies (MVBs) promoting MVBs maturation in megakaryocytes. The sequence is that of Vacuolar protein sorting-associated protein 33B (Vps33b) from Mus musculus (Mouse).